The chain runs to 200 residues: Protein Syd (200 aa).

Belongs to the Syd family.

The protein localises to the cell inner membrane. Interacts with the SecY protein in vivo. May bind preferentially to an uncomplexed state of SecY, thus functioning either as a chelating agent for excess SecY in the cell or as a regulatory factor that negatively controls the translocase function. The sequence is that of Protein Syd from Colwellia psychrerythraea (strain 34H / ATCC BAA-681) (Vibrio psychroerythus).